The sequence spans 419 residues: Tyrosine--tRNA ligase (419 aa).

Y34 serves as a coordination point for L-tyrosine. Residues 39–48 (PSGDSMHIGH) carry the 'HIGH' region motif. Residues Y168 and Q172 each contribute to the L-tyrosine site. The short motif at 230 to 234 (KFGKS) is the 'KMSKS' region element. K233 serves as a coordination point for ATP. In terms of domain architecture, S4 RNA-binding spans 352-418 (ANLVDWLVTL…GKKKYFLVSY (67 aa)).

Belongs to the class-I aminoacyl-tRNA synthetase family. TyrS type 1 subfamily. Homodimer.

The protein localises to the cytoplasm. The enzyme catalyses tRNA(Tyr) + L-tyrosine + ATP = L-tyrosyl-tRNA(Tyr) + AMP + diphosphate + H(+). In terms of biological role, catalyzes the attachment of tyrosine to tRNA(Tyr) in a two-step reaction: tyrosine is first activated by ATP to form Tyr-AMP and then transferred to the acceptor end of tRNA(Tyr). This Listeria monocytogenes serotype 4b (strain CLIP80459) protein is Tyrosine--tRNA ligase.